A 359-amino-acid chain; its full sequence is tRNA-specific 2-thiouridylase MnmA (359 aa).

ATP contacts are provided by residues 7-14 (AMSGGVDS) and Met33. Cys101 acts as the Nucleophile in catalysis. Cys101 and Cys198 are joined by a disulfide. Residue Gly125 participates in ATP binding. Residues 148–150 (KDQ) form an interaction with tRNA region. Cys198 serves as the catalytic Cysteine persulfide intermediate.

Belongs to the MnmA/TRMU family.

The protein resides in the cytoplasm. The catalysed reaction is S-sulfanyl-L-cysteinyl-[protein] + uridine(34) in tRNA + AH2 + ATP = 2-thiouridine(34) in tRNA + L-cysteinyl-[protein] + A + AMP + diphosphate + H(+). Catalyzes the 2-thiolation of uridine at the wobble position (U34) of tRNA, leading to the formation of s(2)U34. This is tRNA-specific 2-thiouridylase MnmA from Chloroflexus aurantiacus (strain ATCC 29366 / DSM 635 / J-10-fl).